Consider the following 316-residue polypeptide: D-alanine--D-alanine ligase (316 aa).

One can recognise an ATP-grasp domain in the interval 109-304 (KRLWRGMDLP…FDEMVLQILA (196 aa)). 135–190 (AADLGLPLIVKPAREGSSLGMMKVESIEALQSAYREAVIFDTAVFAERWLPGAEYT) lines the ATP pocket. Positions 258, 271, and 273 each coordinate Mg(2+).

Belongs to the D-alanine--D-alanine ligase family. Mg(2+) is required as a cofactor. Requires Mn(2+) as cofactor.

It localises to the cytoplasm. The catalysed reaction is 2 D-alanine + ATP = D-alanyl-D-alanine + ADP + phosphate + H(+). Its pathway is cell wall biogenesis; peptidoglycan biosynthesis. Functionally, cell wall formation. The sequence is that of D-alanine--D-alanine ligase from Nitrosococcus oceani (strain ATCC 19707 / BCRC 17464 / JCM 30415 / NCIMB 11848 / C-107).